Reading from the N-terminus, the 419-residue chain is Vacuolar aspartic protease (419 aa).

A signal peptide spans 1 to 22 (MQLSLSALTTVALALTSSLVDA). Residues 104-415 (YFTEIQIGTP…DLDKNAVGLA (312 aa)) enclose the Peptidase A1 domain. D122 is a catalytic residue. A disulfide bridge links C135 with C140. N157 is a glycosylation site (N-linked (GlcNAc...) asparagine). D307 is a catalytic residue. A disulfide bridge connects residues C341 and C374. N-linked (GlcNAc...) asparagine glycosylation is present at N358. The Microbody targeting signal signature appears at 417–419 (TKV).

This sequence belongs to the peptidase A1 family.

It localises to the vacuole. The polypeptide is Vacuolar aspartic protease (APR1) (Candida albicans (Yeast)).